A 167-amino-acid chain; its full sequence is Shikimate kinase (167 aa).

8–15 contacts ATP; that stretch reads GFMGSGKT.

It belongs to the shikimate kinase family.

It localises to the cytoplasm. It catalyses the reaction shikimate + ATP = 3-phosphoshikimate + ADP + H(+). Its pathway is metabolic intermediate biosynthesis; chorismate biosynthesis; chorismate from D-erythrose 4-phosphate and phosphoenolpyruvate: step 5/7. The sequence is that of Shikimate kinase from Helicobacter hepaticus (strain ATCC 51449 / 3B1).